A 221-amino-acid chain; its full sequence is Ribosomal RNA small subunit methyltransferase Nep1 (221 aa).

S-adenosyl-L-methionine is bound by residues G174, G179, and 196 to 201; that span reads IGDETM.

It belongs to the class IV-like SAM-binding methyltransferase superfamily. RNA methyltransferase NEP1 family. As to quaternary structure, homodimer.

It carries out the reaction a pseudouridine in rRNA + S-adenosyl-L-methionine = an N(1)-methylpseudouridine in rRNA + S-adenosyl-L-homocysteine + H(+). Methyltransferase involved in ribosomal biogenesis. Specifically catalyzes the N1-methylation of the pseudouridine corresponding to position 914 in M.jannaschii 16S rRNA. The chain is Ribosomal RNA small subunit methyltransferase Nep1 from Pyrobaculum islandicum (strain DSM 4184 / JCM 9189 / GEO3).